The primary structure comprises 77 residues: Translation initiation factor IF-1, chloroplastic (77 aa).

The S1-like domain maps to 1–71; that stretch reads MKEQKWVHEG…TRGRIIYRLR (71 aa).

This sequence belongs to the IF-1 family. Component of the 30S ribosomal translation pre-initiation complex which assembles on the 30S ribosome in the order IF-2 and IF-3, IF-1 and N-formylmethionyl-tRNA(fMet); mRNA recruitment can occur at any time during PIC assembly.

Its subcellular location is the plastid. The protein localises to the chloroplast. Its function is as follows. One of the essential components for the initiation of protein synthesis. Stabilizes the binding of IF-2 and IF-3 on the 30S subunit to which N-formylmethionyl-tRNA(fMet) subsequently binds. Helps modulate mRNA selection, yielding the 30S pre-initiation complex (PIC). Upon addition of the 50S ribosomal subunit IF-1, IF-2 and IF-3 are released leaving the mature 70S translation initiation complex. The sequence is that of Translation initiation factor IF-1, chloroplastic from Cercidiphyllum japonicum (Katsura tree).